The primary structure comprises 354 residues: MDYGYFFPAQRIEETNGVDFWIDSNAEFTQSKRPDSSTSTLSRVLTDTTNVSNNSGSLKRKTIKNKIFPQRKIFNDSENFDFGKANTDCKHVFKSISKQLIFLPRCFQHHSIRGWMKDRYSEFGYKIKRNQNCPPSACVQALYNTSRSNTEESNPNSLDSLIMYKYMRYSEKKKELMCRFCQGNNWILAENYLKHLFFAHGILSEFKPHTLYHFESKLLKIQGKLNFKIQVLKEPEFSKKILNSLTVSIIPSPLAYYTQTLNGGFRRIHVKCPHCENWIRLGWCEYDEIIRDSFQDFESLRNLNADYNGMSYIQTRNREDIEGIYENYFTHYIQCDLATFRTKCLYVQVITKSN.

Functionally, may be involved in cell wall organization and biogenesis. The protein is Protein ECM8 (ECM8) of Saccharomyces cerevisiae (strain ATCC 204508 / S288c) (Baker's yeast).